The chain runs to 190 residues: Histone-arginine methyltransferase METTL23 (190 aa).

It belongs to the methyltransferase superfamily. METTL23 family. As to quaternary structure, interacts with HSPA5, HSP90B1, TUBULIN, UGGT1 and UGGT2. Interacts with TET3. Interacts with STPG4.

Its subcellular location is the nucleus. It is found in the cytoplasm. The catalysed reaction is L-arginyl-[protein] + 2 S-adenosyl-L-methionine = N(omega),N(omega)-dimethyl-L-arginyl-[protein] + 2 S-adenosyl-L-homocysteine + 2 H(+). Its function is as follows. Histone methyltransferase that dimethylates histone H3 at 'Arg-17', forming asymmetric dimethylarginine (H3R17me2a), leading to activate transcription via chromatin remodeling. Maternal factor involved in epigenetic chromatin reprogramming of the paternal genome in the zygote: mediates H3R17me2a, promoting histone H3.3 incorporation in the male pronucleus, leading to TET3 recruitment and subsequent DNA demethylation. The chain is Histone-arginine methyltransferase METTL23 from Homo sapiens (Human).